The primary structure comprises 151 residues: Methylglyoxal synthase (151 aa).

Residues 6-151 (RTMPAHKHVA…DYEAYLAERM (146 aa)) enclose the MGS-like domain. Residues His-19, Lys-23, 45 to 48 (TGTT), and 65 to 66 (SG) each bind substrate. Asp-71 acts as the Proton donor/acceptor in catalysis. His-98 provides a ligand contact to substrate.

It belongs to the methylglyoxal synthase family.

It catalyses the reaction dihydroxyacetone phosphate = methylglyoxal + phosphate. Functionally, catalyzes the formation of methylglyoxal from dihydroxyacetone phosphate. The protein is Methylglyoxal synthase of Vibrio parahaemolyticus serotype O3:K6 (strain RIMD 2210633).